A 741-amino-acid polypeptide reads, in one-letter code: MEQTYQYAWIIPFLPLPVPMLIGLGLLLFPTATKSLRRMWAFQSVLLLSIVMIFSMNLSIQQINSSSVYQYVWSWIINNDFSLEFGYLIDPLTSIMSILITTVGILVLIYSDNYMSHDHGYLRFFAYMSFFSTSMLGLVTSSNLIQIYIFWELVGMCSYLLIGFWFTRPVAAKACQKAFVTNRVGDFGLLLGILGFYWITGSFEFRDLFQIFNNLISTNQVNFLFVTLCAVLLFAGAIAKSAQFPLHVWLPDAMEGPTPISALIHAATMVAAGIFLVARLLPLFIVIPHIMNFISLIGIITVFLGATLALAQKDINRGLAYSTMSQLGYMMLALGMGSYRSALFHLITHAYSKALLFLGSGSVIHSMETLVGYCPKKSQNMVLMGGLTKHVPITKNSFLLGTLSLCGIPPLACFWSKDEILNDSWLYSPIFAIIAWSTAGLTAFYMCRIYLLTFEGHLNVHFQNYSGKRNTPLYSISLWGKEGSKISNKNFRLVTLLKMNKTGRPSFFSNRVYKIDENVRNMTPPFLSIPNFGNIKTSLYPYESDNTMLFPILILFIFTLFVGFLGIPLNQDVDILTKWLTPSINLLHKNSNNSIDWYEFCKDALFSVSIASFGIFIAFFLYKPVYSSFQNLDLINSFFKMGPRRNFYDKIKNAIYDWSYNRGYIDAFYGTFFIVGTRKLAEFTHFFDRRIIDGIPNGVGLISFFVAEVIKSVGGGRISSYLFFYFSYVSIFLVIYYFLNL.

16 helical membrane passes run 9–29 (WIIP…LLLF), 40–60 (WAFQ…NLSI), 89–109 (IDPL…LVLI), 125–145 (FAYM…SNLI), 147–167 (IYIF…FWFT), 185–205 (GDFG…SFEF), 219–239 (NQVN…GAIA), 258–278 (TPIS…FLVA), 289–311 (HIMN…LALA), 327–347 (LGYM…FHLI), 354–374 (ALLF…VGYC), 396–416 (NSFL…CFWS), 425–445 (WLYS…TAFY), 549–569 (LFPI…GIPL), 605–625 (LFSV…YKPV), and 721–741 (YLFF…FLNL).

This sequence belongs to the complex I subunit 5 family. In terms of assembly, NDH is composed of at least 16 different subunits, 5 of which are encoded in the nucleus.

It localises to the plastid. Its subcellular location is the chloroplast thylakoid membrane. The catalysed reaction is a plastoquinone + NADH + (n+1) H(+)(in) = a plastoquinol + NAD(+) + n H(+)(out). It catalyses the reaction a plastoquinone + NADPH + (n+1) H(+)(in) = a plastoquinol + NADP(+) + n H(+)(out). Its function is as follows. NDH shuttles electrons from NAD(P)H:plastoquinone, via FMN and iron-sulfur (Fe-S) centers, to quinones in the photosynthetic chain and possibly in a chloroplast respiratory chain. The immediate electron acceptor for the enzyme in this species is believed to be plastoquinone. Couples the redox reaction to proton translocation, and thus conserves the redox energy in a proton gradient. The chain is NAD(P)H-quinone oxidoreductase subunit 5, chloroplastic (ndhF) from Symphyotrichum cordifolium (Heart-leaved aster).